The primary structure comprises 227 residues: Uracil-DNA glycosylase (227 aa).

Asp65 serves as the catalytic Proton acceptor.

It belongs to the uracil-DNA glycosylase (UDG) superfamily. UNG family.

It is found in the cytoplasm. It carries out the reaction Hydrolyzes single-stranded DNA or mismatched double-stranded DNA and polynucleotides, releasing free uracil.. Functionally, excises uracil residues from the DNA which can arise as a result of misincorporation of dUMP residues by DNA polymerase or due to deamination of cytosine. The protein is Uracil-DNA glycosylase of Buchnera aphidicola subsp. Cinara cedri (strain Cc).